A 330-amino-acid polypeptide reads, in one-letter code: Aspartate--ammonia ligase (330 aa).

This sequence belongs to the class-II aminoacyl-tRNA synthetase family. AsnA subfamily.

The protein resides in the cytoplasm. It catalyses the reaction L-aspartate + NH4(+) + ATP = L-asparagine + AMP + diphosphate + H(+). Its pathway is amino-acid biosynthesis; L-asparagine biosynthesis; L-asparagine from L-aspartate (ammonia route): step 1/1. The polypeptide is Aspartate--ammonia ligase (Streptococcus equi subsp. zooepidemicus (strain H70)).